We begin with the raw amino-acid sequence, 421 residues long: Monopolin complex subunit mde4 (421 aa).

Disordered regions lie at residues 122–158 and 224–316; these read QKSN…NKDE and DRKL…MTVS. Residues 133–149 are compositionally biased toward polar residues; sequence VSQNRLRGSLDTVSSPS. Residues 224-238 show a composition bias toward basic and acidic residues; it reads DRKLRMQKKSTERKS. A compositionally biased stretch (polar residues) spans 262-287; that stretch reads RQPNATSGSPLSVTPFLQKTSTSIGL. The span at 288–304 shows a compositional bias: low complexity; it reads SSSPPQSSPSAQSSQPF.

In terms of assembly, component of a monopolin-like complex composed of pcs1 and mde4. The complex associates with the kinetochore.

It localises to the nucleus. It is found in the chromosome. The protein resides in the centromere. Its function is as follows. The monopolin-like pcs1/mde4 complex is essential for accurate chromosome segregation during mitosis and meiosis II. May clamp together microtubule binding sites on the same kinetochore, preventing merotelic attachment of microtubules. This Schizosaccharomyces pombe (strain 972 / ATCC 24843) (Fission yeast) protein is Monopolin complex subunit mde4 (mde4).